Consider the following 21-residue polypeptide: Helicopsin (21 aa).

It belongs to the CRISP family. Post-translationally, contains 8 disulfide bonds. In terms of tissue distribution, expressed by the salivary gland.

It is found in the secreted. In terms of biological role, helicopsin exhibits robust neurotoxic activity as shown by immediate death (about 8 minutes) of mice due to respiratory paralysis. This chain is Helicopsin, found in Helicops angulatus (South American water snake).